Here is a 344-residue protein sequence, read N- to C-terminus: FCS-Like Zinc finger 10 (344 aa).

The FLZ-type zinc-finger motif lies at 270-314; it reads DFLSFCYGCSKKLGMGEDIYMYSGYKAFCSSECRSKEIDLDEEME. Over residues 309–320 the composition is skewed to acidic residues; sequence LDEEMEDGDEEE. The segment at 309–344 is disordered; that stretch reads LDEEMEDGDEEEAIKSVSSSDKESKKKSNGVFFTVG.

The protein belongs to the FLZ family. In terms of assembly, interacts with KIN10 and KIN11 via its FLZ-type zinc finger domain. Interacts with KINB1, KINB2 and KINB3 via its N-terminal part. Forms homodimer and heterodimer with FLZ2 and FLZ12 in vitro. Early expressed in hypocotyl and cotyledon and preferentially in the stelar region of the shoot and root. Later expressed in root-shoot junction, lateral root, old or senescing leaves and in pistil and pollen of flower buds or open flowers.

Its subcellular location is the cytoplasm. It is found in the nucleus. The protein localises to the endoplasmic reticulum. Its function is as follows. May act as an adapter to facilitate the interaction of SnRK1 complex with effector proteins, conferring tissue- and stimulus-type specific differences in the SnRK1 regulation pathway. Negatively regulates KIN10 leading to a repression of the SnRK1 signaling pathway. The protein is FCS-Like Zinc finger 10 of Arabidopsis thaliana (Mouse-ear cress).